Reading from the N-terminus, the 185-residue chain is Ribosome-recycling factor (185 aa).

The interval 138-160 (AMDKAVKDGEVGEDEGARGEKEL) is disordered.

This sequence belongs to the RRF family.

Its subcellular location is the cytoplasm. Functionally, responsible for the release of ribosomes from messenger RNA at the termination of protein biosynthesis. May increase the efficiency of translation by recycling ribosomes from one round of translation to another. This Micrococcus luteus (strain ATCC 4698 / DSM 20030 / JCM 1464 / CCM 169 / CCUG 5858 / IAM 1056 / NBRC 3333 / NCIMB 9278 / NCTC 2665 / VKM Ac-2230) (Micrococcus lysodeikticus) protein is Ribosome-recycling factor.